We begin with the raw amino-acid sequence, 186 residues long: Elongation factor P (186 aa).

It belongs to the elongation factor P family.

It localises to the cytoplasm. The protein operates within protein biosynthesis; polypeptide chain elongation. Its function is as follows. Involved in peptide bond synthesis. Stimulates efficient translation and peptide-bond synthesis on native or reconstituted 70S ribosomes in vitro. Probably functions indirectly by altering the affinity of the ribosome for aminoacyl-tRNA, thus increasing their reactivity as acceptors for peptidyl transferase. The polypeptide is Elongation factor P (Prochlorococcus marinus (strain MIT 9301)).